The primary structure comprises 528 residues: Na(+)/H(+) antiporter NhaB (528 aa).

10 consecutive transmembrane segments (helical) span residues 11–31 (VNFLGNSPKWYKLAILSFLVI), 67–87 (PGGLLAIQAVAIGMTSPSQVL), 98–118 (LLLIFMVAGIYFMKQLLLFVF), 140–160 (AFLSAFLDALTVIAVIIAVGI), 240–260 (FFIRMSPVTIPVLLSGLLTCV), 311–331 (LVAGLALHLASVGLIGLSVII), 350–370 (EEALPFTALLAVFFAIVGVII), 391–411 (LVVFFIANGVLSMVSDNVFVG), 449–469 (ATPNGQAAFLFLLTSALAPLI), and 476–496 (MVIMALPYTLVLSIVGIVTIE).

It belongs to the NhaB Na(+)/H(+) (TC 2.A.34) antiporter family.

The protein resides in the cell inner membrane. It carries out the reaction 2 Na(+)(in) + 3 H(+)(out) = 2 Na(+)(out) + 3 H(+)(in). In terms of biological role, na(+)/H(+) antiporter that extrudes sodium in exchange for external protons. This is Na(+)/H(+) antiporter NhaB from Shewanella denitrificans (strain OS217 / ATCC BAA-1090 / DSM 15013).